The chain runs to 321 residues: Acetyl-coenzyme A carboxylase carboxyl transferase subunit alpha (321 aa).

The CoA carboxyltransferase C-terminal domain maps to 39-293 (RLQQKSQTLA…RRALGDSLRQ (255 aa)).

This sequence belongs to the AccA family. In terms of assembly, acetyl-CoA carboxylase is a heterohexamer composed of biotin carboxyl carrier protein (AccB), biotin carboxylase (AccC) and two subunits each of ACCase subunit alpha (AccA) and ACCase subunit beta (AccD).

It is found in the cytoplasm. It catalyses the reaction N(6)-carboxybiotinyl-L-lysyl-[protein] + acetyl-CoA = N(6)-biotinyl-L-lysyl-[protein] + malonyl-CoA. It participates in lipid metabolism; malonyl-CoA biosynthesis; malonyl-CoA from acetyl-CoA: step 1/1. Functionally, component of the acetyl coenzyme A carboxylase (ACC) complex. First, biotin carboxylase catalyzes the carboxylation of biotin on its carrier protein (BCCP) and then the CO(2) group is transferred by the carboxyltransferase to acetyl-CoA to form malonyl-CoA. The polypeptide is Acetyl-coenzyme A carboxylase carboxyl transferase subunit alpha (Bordetella avium (strain 197N)).